The sequence spans 135 residues: Histone H2A.4 (135 aa).

It belongs to the histone H2A family. In terms of assembly, the nucleosome is a histone octamer containing two molecules each of H2A, H2B, H3 and H4 assembled in one H3-H4 heterotetramer and two H2A-H2B heterodimers. The octamer wraps approximately 147 bp of DNA. In terms of tissue distribution, expressed preferentially in meristematic tissues of young seedlings, in stigma and ovary but not in pollen.

It is found in the nucleus. The protein localises to the chromosome. Its function is as follows. Core component of nucleosome. Nucleosomes wrap and compact DNA into chromatin, limiting DNA accessibility to the cellular machineries which require DNA as a template. Histones thereby play a central role in transcription regulation, DNA repair, DNA replication and chromosomal stability. DNA accessibility is regulated via a complex set of post-translational modifications of histones, also called histone code, and nucleosome remodeling. The chain is Histone H2A.4 (TH254) from Triticum aestivum (Wheat).